Consider the following 207-residue polypeptide: Large ribosomal subunit protein bL20 (207 aa).

Positions 117–161 (QETQPQPEEKTSLQPEKVLSTELSEEKSDDTLETKPQTTQVKAKK) are disordered. The segment covering 140 to 149 (SEEKSDDTLE) has biased composition (basic and acidic residues).

It belongs to the bacterial ribosomal protein bL20 family.

Functionally, binds directly to 23S ribosomal RNA and is necessary for the in vitro assembly process of the 50S ribosomal subunit. It is not involved in the protein synthesizing functions of that subunit. This chain is Large ribosomal subunit protein bL20, found in Onion yellows phytoplasma (strain OY-M).